Reading from the N-terminus, the 340-residue chain is Ribosomal RNA large subunit methyltransferase F (340 aa).

The segment at 1 to 36 (MNAPRTPKPARKKPDSATPAKPVEPRKEASLHPRNR) is disordered.

This sequence belongs to the methyltransferase superfamily. METTL16/RlmF family.

It localises to the cytoplasm. The enzyme catalyses adenosine(1618) in 23S rRNA + S-adenosyl-L-methionine = N(6)-methyladenosine(1618) in 23S rRNA + S-adenosyl-L-homocysteine + H(+). Functionally, specifically methylates the adenine in position 1618 of 23S rRNA. The sequence is that of Ribosomal RNA large subunit methyltransferase F from Pseudomonas fluorescens (strain Pf0-1).